The chain runs to 362 residues: Protein mab-21-like 3 (362 aa).

The protein belongs to the mab-21 family.

This is Protein mab-21-like 3 (MAB21L3) from Homo sapiens (Human).